The primary structure comprises 355 residues: UDP-N-acetylglucosamine--N-acetylmuramyl-(pentapeptide) pyrophosphoryl-undecaprenol N-acetylglucosamine transferase (355 aa).

UDP-N-acetyl-alpha-D-glucosamine-binding positions include 15 to 17 (TGG), asparagine 127, arginine 163, serine 191, isoleucine 244, 263 to 268 (ALTVSE), and glutamine 288.

Belongs to the glycosyltransferase 28 family. MurG subfamily.

The protein localises to the cell inner membrane. The catalysed reaction is di-trans,octa-cis-undecaprenyl diphospho-N-acetyl-alpha-D-muramoyl-L-alanyl-D-glutamyl-meso-2,6-diaminopimeloyl-D-alanyl-D-alanine + UDP-N-acetyl-alpha-D-glucosamine = di-trans,octa-cis-undecaprenyl diphospho-[N-acetyl-alpha-D-glucosaminyl-(1-&gt;4)]-N-acetyl-alpha-D-muramoyl-L-alanyl-D-glutamyl-meso-2,6-diaminopimeloyl-D-alanyl-D-alanine + UDP + H(+). It participates in cell wall biogenesis; peptidoglycan biosynthesis. Cell wall formation. Catalyzes the transfer of a GlcNAc subunit on undecaprenyl-pyrophosphoryl-MurNAc-pentapeptide (lipid intermediate I) to form undecaprenyl-pyrophosphoryl-MurNAc-(pentapeptide)GlcNAc (lipid intermediate II). The protein is UDP-N-acetylglucosamine--N-acetylmuramyl-(pentapeptide) pyrophosphoryl-undecaprenol N-acetylglucosamine transferase of Salmonella dublin (strain CT_02021853).